The following is a 151-amino-acid chain: Large ribosomal subunit protein bL9 (151 aa).

This sequence belongs to the bacterial ribosomal protein bL9 family.

Its function is as follows. Binds to the 23S rRNA. This is Large ribosomal subunit protein bL9 from Acidobacterium capsulatum (strain ATCC 51196 / DSM 11244 / BCRC 80197 / JCM 7670 / NBRC 15755 / NCIMB 13165 / 161).